The sequence spans 135 residues: NADPH-dependent 7-cyano-7-deazaguanine reductase (135 aa).

The Thioimide intermediate role is filled by Cys48. The Proton donor role is filled by Asp55. Substrate-binding positions include Ile70 to Leu72 and His89 to Glu90.

The protein belongs to the GTP cyclohydrolase I family. QueF type 1 subfamily.

It localises to the cytoplasm. The enzyme catalyses 7-aminomethyl-7-carbaguanine + 2 NADP(+) = 7-cyano-7-deazaguanine + 2 NADPH + 3 H(+). Its pathway is tRNA modification; tRNA-queuosine biosynthesis. In terms of biological role, catalyzes the NADPH-dependent reduction of 7-cyano-7-deazaguanine (preQ0) to 7-aminomethyl-7-deazaguanine (preQ1). The chain is NADPH-dependent 7-cyano-7-deazaguanine reductase from Prochlorococcus marinus (strain MIT 9313).